The sequence spans 382 residues: Dual-specificity RNA methyltransferase RlmN (382 aa).

The Proton acceptor role is filled by Glu-95. The Radical SAM core domain maps to 101 to 349 (EETRGTLCVS…TTVRKTRGDD (249 aa)). A disulfide bridge links Cys-108 with Cys-354. [4Fe-4S] cluster contacts are provided by Cys-115, Cys-119, and Cys-122. S-adenosyl-L-methionine is bound by residues 180–181 (GE), Ser-212, 234–236 (SLH), and Asn-311. Cys-354 (S-methylcysteine intermediate) is an active-site residue.

It belongs to the radical SAM superfamily. RlmN family. [4Fe-4S] cluster serves as cofactor.

The protein resides in the cytoplasm. It catalyses the reaction adenosine(2503) in 23S rRNA + 2 reduced [2Fe-2S]-[ferredoxin] + 2 S-adenosyl-L-methionine = 2-methyladenosine(2503) in 23S rRNA + 5'-deoxyadenosine + L-methionine + 2 oxidized [2Fe-2S]-[ferredoxin] + S-adenosyl-L-homocysteine. The catalysed reaction is adenosine(37) in tRNA + 2 reduced [2Fe-2S]-[ferredoxin] + 2 S-adenosyl-L-methionine = 2-methyladenosine(37) in tRNA + 5'-deoxyadenosine + L-methionine + 2 oxidized [2Fe-2S]-[ferredoxin] + S-adenosyl-L-homocysteine. In terms of biological role, specifically methylates position 2 of adenine 2503 in 23S rRNA and position 2 of adenine 37 in tRNAs. m2A2503 modification seems to play a crucial role in the proofreading step occurring at the peptidyl transferase center and thus would serve to optimize ribosomal fidelity. The polypeptide is Dual-specificity RNA methyltransferase RlmN (Paraburkholderia phymatum (strain DSM 17167 / CIP 108236 / LMG 21445 / STM815) (Burkholderia phymatum)).